The primary structure comprises 258 residues: MPKTLTKKLNAIKAAGKGIFVPYIMAGDHEKGLDGLAETIHFLEDLGVSAIEVGIPFSDPVADGPVIEEAGLRSLAHGTSTQALVETLKTIETEIPLVIMTYFNPLFQYGVENFVKDLADTAVKGLIIPDLPHEHANFVEPFLADTDIALIPLVSLTTGIERQKELIEGAEGFVYAVAINGVTGKSGNYRADLDKHLAQLHQVADIPVLTGFGVSSQADLERFNAVSDGVIVGSKIVKALHQGEPIQDFIKQAVAYQK.

Active-site proton acceptor residues include E52 and D63.

This sequence belongs to the TrpA family. As to quaternary structure, tetramer of two alpha and two beta chains.

It catalyses the reaction (1S,2R)-1-C-(indol-3-yl)glycerol 3-phosphate + L-serine = D-glyceraldehyde 3-phosphate + L-tryptophan + H2O. Its pathway is amino-acid biosynthesis; L-tryptophan biosynthesis; L-tryptophan from chorismate: step 5/5. In terms of biological role, the alpha subunit is responsible for the aldol cleavage of indoleglycerol phosphate to indole and glyceraldehyde 3-phosphate. The protein is Tryptophan synthase alpha chain of Streptococcus pneumoniae (strain Taiwan19F-14).